The chain runs to 393 residues: MLQIGTTFSKTATKILLCGAGELGKEVAIEAQRLGLEVIALDRYENAPAMQVADRSYTLSMLDGEALRHIIEKEKPDYIVPEIEAIATDTLAKLEQEGFNIVPSAKATQLTMNREGIRRLAAEDLGIPTSPYAFADNKEDFTAAVDAIGIPCVVKPIMSSSGKGQSVIKSTADIDSAWHYAQEGGRAGKGKVIIEGFVDFDYEITLLTIRHKNGTSFCAPIGHIQEDGDYRQSWQPHPMSDIAVQSAEKIALKITEALGGWGLFGVELFIKDDQVIFSEVSPRPHDTGLVTLISQDLSEFALHLRAILGLPIPNITQHGPSASSVILPTGHSTETQFSGLEDALKEPDTQIRLFGKPEIAGRRRMGVALARDTSIEKAIEKAKASAMAVKVDF.

N(1)-(5-phospho-beta-D-ribosyl)glycinamide is bound by residues 22–23 (EL) and glutamate 82. ATP is bound by residues arginine 114, lysine 155, 160-165 (SSGKGQ), 195-198 (EGFV), and glutamate 203. The ATP-grasp domain maps to 119–308 (RLAAEDLGIP…EFALHLRAIL (190 aa)). Mg(2+) is bound by residues glutamate 267 and glutamate 279. Residues aspartate 286, lysine 356, and 363–364 (RR) each bind N(1)-(5-phospho-beta-D-ribosyl)glycinamide.

This sequence belongs to the PurK/PurT family. Homodimer.

It catalyses the reaction N(1)-(5-phospho-beta-D-ribosyl)glycinamide + formate + ATP = N(2)-formyl-N(1)-(5-phospho-beta-D-ribosyl)glycinamide + ADP + phosphate + H(+). Its pathway is purine metabolism; IMP biosynthesis via de novo pathway; N(2)-formyl-N(1)-(5-phospho-D-ribosyl)glycinamide from N(1)-(5-phospho-D-ribosyl)glycinamide (formate route): step 1/1. Involved in the de novo purine biosynthesis. Catalyzes the transfer of formate to 5-phospho-ribosyl-glycinamide (GAR), producing 5-phospho-ribosyl-N-formylglycinamide (FGAR). Formate is provided by PurU via hydrolysis of 10-formyl-tetrahydrofolate. The chain is Formate-dependent phosphoribosylglycinamide formyltransferase from Hydrogenovibrio crunogenus (strain DSM 25203 / XCL-2) (Thiomicrospira crunogena).